Here is a 134-residue protein sequence, read N- to C-terminus: Photosystem II lipoprotein Psb27 (134 aa).

A signal peptide spans 1 to 24 (MSFLKNQLSRLLALILVVAIGLTA). C25 carries N-palmitoyl cysteine lipidation. C25 carries S-diacylglycerol cysteine lipidation.

Belongs to the Psb27 family. In terms of assembly, monomer. Forms a complex with a monomeric, partially assembled PSII. This is probably the complex in which D1 is assembled and/or replaced. Present in 6-10% of PSII complexes; mostly in monomeric PSII. These PSII do not evolve oxygen, do not have an assembled calcium-manganese-oxide cluster. Psb27-containing PSII seem to be assembly intermediates; a wild-type strain includes the intrinsic membrane proteins, Psb27, Pbs28, substoichiometric amounts of PsbO and PsbQ but no PsbU or PsbV, while a ctpA deletion mutant includes the intrinsic membrane proteins (D1 as precursor), Psb27, a very low amount of PsbO and PsbQ, but no PsbU or PsbV. Small amounts of Psb27 interact with the lumenal domain of CP43 (psbC) in wild-type and a ctpA mutant. A small amount can also be detected in monomeric and trimeric photosystem I (PSI), possibly via association with PsaB.

The protein localises to the cellular thylakoid membrane. Functionally, plays a role in the repair and/or biogenesis of the calcium-manganese-oxide cluster on the lumenal face of the thylakoid membrane. Photosystem II (PSII) complexes containing this protein are monomeric, are assembly intermediates lacking the calcium-manganese-oxide cluster and miss some of the lumenal subunits. Probably blocks binding of some of the small lumenal subunits. The protein is Photosystem II lipoprotein Psb27 of Synechocystis sp. (strain ATCC 27184 / PCC 6803 / Kazusa).